Here is a 198-residue protein sequence, read N- to C-terminus: Large ribosomal subunit protein bL12m (198 aa).

Residues 1-36 (MLPSATSLLRGPCLGLRAAALRLVRQQVPHVCAVRL) constitute a mitochondrion transit peptide. Residues 106-115 (GAAPAPTAPE) are compositionally biased toward low complexity. The segment at 106-126 (GAAPAPTAPEAAEEDVPKQKE) is disordered. N6-acetyllysine occurs at positions 125, 138, 142, and 144. The residue at position 150 (K150) is an N6-acetyllysine; alternate. K150 bears the N6-succinyllysine; alternate mark. K150 is covalently cross-linked (Glycyl lysine isopeptide (Lys-Gly) (interchain with G-Cter in ubiquitin)). An N6-succinyllysine modification is found at K162. An N6-acetyllysine mark is found at K163 and K173. K178 bears the N6-acetyllysine; alternate mark. Residue K178 is modified to N6-succinyllysine; alternate. K185 is subject to N6-acetyllysine.

The protein belongs to the bacterial ribosomal protein bL12 family. In terms of assembly, component of the mitochondrial ribosome large subunit (39S) which comprises a 16S rRNA and about 50 distinct proteins. Interacts with NOA1. Two mature forms are produced by differential two-step proteolytic cleavage. Cleaved by the mitochondrial processing protease to produce the long mature form and subsequently by the mitochondrial intermediate protease to produce the short mature form. In terms of processing, in the presence of CUL3, undergoes 'Lys-63'-linked ubiquitination at Lys-150 which results in proteasomal degradation.

It localises to the mitochondrion matrix. Functionally, as a component of the mitochondrial large ribosomal subunit, plays a role in mitochondrial translation. When present in mitochondria as a free protein not associated with the ribosome, associates with mitochondrial RNA polymerase POLRMT to activate transcription. Required for POLRMT stability. In Bos taurus (Bovine), this protein is Large ribosomal subunit protein bL12m (MRPL12).